Consider the following 447-residue polypeptide: 3-phosphoshikimate 1-carboxyvinyltransferase 2 (447 aa).

Residues lysine 40, serine 41, and arginine 45 each contribute to the 3-phosphoshikimate site. Lysine 40 is a phosphoenolpyruvate binding site. 2 residues coordinate phosphoenolpyruvate: glycine 109 and arginine 138. Residues serine 184, serine 185, glutamine 186, aspartate 329, and histidine 356 each contribute to the 3-phosphoshikimate site. Residue glutamine 186 participates in phosphoenolpyruvate binding. Aspartate 329 acts as the Proton acceptor in catalysis. The phosphoenolpyruvate site is built by arginine 360, arginine 403, and lysine 428.

This sequence belongs to the EPSP synthase family. As to quaternary structure, monomer.

The protein localises to the cytoplasm. It carries out the reaction 3-phosphoshikimate + phosphoenolpyruvate = 5-O-(1-carboxyvinyl)-3-phosphoshikimate + phosphate. Its pathway is metabolic intermediate biosynthesis; chorismate biosynthesis; chorismate from D-erythrose 4-phosphate and phosphoenolpyruvate: step 6/7. Catalyzes the transfer of the enolpyruvyl moiety of phosphoenolpyruvate (PEP) to the 5-hydroxyl of shikimate-3-phosphate (S3P) to produce enolpyruvyl shikimate-3-phosphate and inorganic phosphate. The protein is 3-phosphoshikimate 1-carboxyvinyltransferase 2 of Halalkalibacterium halodurans (strain ATCC BAA-125 / DSM 18197 / FERM 7344 / JCM 9153 / C-125) (Bacillus halodurans).